Reading from the N-terminus, the 154-residue chain is uncharacterized protein (154 aa).

Positions 13–128 (SKGVLLLRTL…VFTFVAVDNN (116 aa)) constitute a HotDog ACOT-type domain.

Belongs to the acyl coenzyme A hydrolase family.

This is an uncharacterized protein from Haemophilus influenzae (strain ATCC 51907 / DSM 11121 / KW20 / Rd).